The primary structure comprises 565 residues: Urocanate hydratase (565 aa).

NAD(+) is bound by residues 61 to 62, Gln-139, 185 to 187, Glu-205, Arg-210, 251 to 252, 272 to 276, 282 to 283, and Tyr-331; these read GG, GMG, NA, QTSAH, and YL. The active site involves Cys-419. Residues 453-472 are disordered; the sequence is LDSGSVASPNRETESMRDGS. The segment covering 463 to 472 has biased composition (basic and acidic residues); that stretch reads RETESMRDGS. Gly-501 contributes to the NAD(+) binding site.

This sequence belongs to the urocanase family. NAD(+) serves as cofactor.

It localises to the cytoplasm. The enzyme catalyses 4-imidazolone-5-propanoate = trans-urocanate + H2O. The protein operates within amino-acid degradation; L-histidine degradation into L-glutamate; N-formimidoyl-L-glutamate from L-histidine: step 2/3. In terms of biological role, catalyzes the conversion of urocanate to 4-imidazolone-5-propionate. The sequence is that of Urocanate hydratase from Pseudomonas syringae pv. syringae (strain B728a).